Reading from the N-terminus, the 560-residue chain is Dihydroxy-acid dehydratase (560 aa).

Cysteine 50 lines the [2Fe-2S] cluster pocket. Residue aspartate 82 participates in Mg(2+) binding. Cysteine 123 lines the [2Fe-2S] cluster pocket. Mg(2+) contacts are provided by aspartate 124 and lysine 125. Lysine 125 is modified (N6-carboxylysine). Cysteine 195 contacts [2Fe-2S] cluster. Glutamate 447 provides a ligand contact to Mg(2+). Serine 473 (proton acceptor) is an active-site residue.

This sequence belongs to the IlvD/Edd family. In terms of assembly, homodimer. Requires [2Fe-2S] cluster as cofactor. It depends on Mg(2+) as a cofactor.

The enzyme catalyses (2R)-2,3-dihydroxy-3-methylbutanoate = 3-methyl-2-oxobutanoate + H2O. The catalysed reaction is (2R,3R)-2,3-dihydroxy-3-methylpentanoate = (S)-3-methyl-2-oxopentanoate + H2O. Its pathway is amino-acid biosynthesis; L-isoleucine biosynthesis; L-isoleucine from 2-oxobutanoate: step 3/4. It functions in the pathway amino-acid biosynthesis; L-valine biosynthesis; L-valine from pyruvate: step 3/4. In terms of biological role, functions in the biosynthesis of branched-chain amino acids. Catalyzes the dehydration of (2R,3R)-2,3-dihydroxy-3-methylpentanoate (2,3-dihydroxy-3-methylvalerate) into 2-oxo-3-methylpentanoate (2-oxo-3-methylvalerate) and of (2R)-2,3-dihydroxy-3-methylbutanoate (2,3-dihydroxyisovalerate) into 2-oxo-3-methylbutanoate (2-oxoisovalerate), the penultimate precursor to L-isoleucine and L-valine, respectively. This is Dihydroxy-acid dehydratase from Methylibium petroleiphilum (strain ATCC BAA-1232 / LMG 22953 / PM1).